We begin with the raw amino-acid sequence, 91 residues long: HssA/B-like protein 24 (91 aa).

The protein belongs to the hssA/B family.

The polypeptide is HssA/B-like protein 24 (hssl24) (Dictyostelium discoideum (Social amoeba)).